The sequence spans 102 residues: Turripeptide OL55-like (102 aa).

Contains 8 disulfide bonds. As to expression, expressed by the venom duct.

The protein resides in the secreted. Its function is as follows. Acts as a neurotoxin by inhibiting an ion channel. The polypeptide is Turripeptide OL55-like (Lophiotoma acuta (Marbled turris)).